A 1274-amino-acid polypeptide reads, in one-letter code: Symplekin (1274 aa).

The tract at residues 1–124 is interaction with HSF1; it reads MASGSGDSVT…NMLLRDENVN (124 aa). Phosphoserine is present on Ser13. HEAT repeat units follow at residues 31–64, 67–101, 104–146, 153–192, and 227–266; these read TTSE…LIIN, PTLL…EACK, IELL…WMVK, LQEA…GLIV, and VLWE…IARQ. The disordered stretch occupies residues 335-392; sequence IARNMPSSKDTRKRPRDDSDSTLKKMKLEPNLGEDDEDKDLEPGPSGTSKASAQISGQ. Positions 345–360 match the Nuclear localization signal motif; that stretch reads TRKRPRDDSDSTLKKM. Residues 349 to 362 are compositionally biased toward basic and acidic residues; sequence PRDDSDSTLKKMKL. Lys361 participates in a covalent cross-link: Glycyl lysine isopeptide (Lys-Gly) (interchain with G-Cter in SUMO1); alternate. A Glycyl lysine isopeptide (Lys-Gly) (interchain with G-Cter in SUMO2); alternate cross-link involves residue Lys361. The span at 380 to 392 shows a compositional bias: polar residues; the sequence is SGTSKASAQISGQ. Residue Lys483 forms a Glycyl lysine isopeptide (Lys-Gly) (interchain with G-Cter in SUMO2) linkage. A Phosphoserine modification is found at Ser494. Disordered stretches follow at residues 1102–1137 and 1149–1274; these read GKQE…PPQD and LKRQ…KGNS. Residues 1149-1159 are compositionally biased toward basic and acidic residues; sequence LKRQLEEEQKL. Pro residues predominate over residues 1173–1185; sequence SPSPSARPGPPPS. A phosphoserine mark is found at Ser1221 and Ser1222. A Glycyl lysine isopeptide (Lys-Gly) (interchain with G-Cter in SUMO1) cross-link involves residue Lys1239. The residue at position 1243 (Ser1243) is a Phosphoserine. Residue Thr1257 is modified to Phosphothreonine. Position 1259 is a phosphoserine (Ser1259). Basic and acidic residues predominate over residues 1263-1274; sequence EDAREPEAKGNS.

The protein belongs to the Symplekin family. In terms of assembly, found in a heat-sensitive complex at least composed of several cleavage and polyadenylation specific and cleavage stimulation factors. Interacts with CPSF2, CPSF3 and CSTF2. Interacts (via N-terminus) with HSF1; this interaction is direct and occurs upon heat shock. Interacts with SSU72. In testis, expressed in polar epithelia and Sertoli cells but not in vascular endothelia. The protein is detected in stomach, duodenum, pancreas, liver, fetal brain, carcinomas, lens-forming cells, fibroblasts, lymphocytes, lymphoma cells, erythroleukemia cells but not in endothelium of vessels, epidermis, intercalated disks, Purkinje fiber cells of the heart and lymph node.

Its subcellular location is the cytoplasm. The protein localises to the cytoskeleton. It is found in the cell junction. The protein resides in the tight junction. It localises to the cell membrane. Its subcellular location is the nucleus. The protein localises to the nucleoplasm. Scaffold protein that functions as a component of a multimolecular complex involved in histone mRNA 3'-end processing. Specific component of the tight junction (TJ) plaque, but might not be an exclusively junctional component. May have a house-keeping rule. Is involved in pre-mRNA polyadenylation. Enhances SSU72 phosphatase activity. In Homo sapiens (Human), this protein is Symplekin (SYMPK).